Consider the following 261-residue polypeptide: Ribosomal RNA small subunit methyltransferase G (261 aa).

S-adenosyl-L-methionine contacts are provided by residues Gly-94, Leu-99, 117–119, 145–146, and Arg-164; these read EST and VE.

This sequence belongs to the methyltransferase superfamily. RNA methyltransferase RsmG family.

Its subcellular location is the cytoplasm. Its function is as follows. Specifically methylates the N7 position of a guanine in 16S rRNA. This chain is Ribosomal RNA small subunit methyltransferase G, found in Rubrobacter xylanophilus (strain DSM 9941 / JCM 11954 / NBRC 16129 / PRD-1).